The chain runs to 2094 residues: Protein Ycf2 (2094 aa).

1385 to 1392 (GPPETGRS) serves as a coordination point for ATP.

Belongs to the Ycf2 family.

It localises to the plastid. The protein localises to the chloroplast stroma. In terms of biological role, probable ATPase of unknown function. Its presence in a non-photosynthetic plant (Epifagus virginiana) and experiments in tobacco indicate that it has an essential function which is probably not related to photosynthesis. The chain is Protein Ycf2 from Huperzia lucidula (Shining clubmoss).